The chain runs to 208 residues: MKKIFTIAALSLPLFCHLPAMAGGQDDLKVKLMEINTLKANFNQTVTDINQKVIQTGEGVFALSHPNQFYWHLTAPDESLIVADGTDVWIYNPFAEEVSVMDINQAINASPIALLVHSDDATWSQYDVVNNGDCFDISPRDKDSGVSEVEVCFNQQQLTKMVLKDQQGNTSDFTLTNQTPIAENDKDLFKFIVPDDVDIDDQRLKSQN.

The signal sequence occupies residues 1–22 (MKKIFTIAALSLPLFCHLPAMA).

It belongs to the LolA family. As to quaternary structure, monomer.

It localises to the periplasm. Its function is as follows. Participates in the translocation of lipoproteins from the inner membrane to the outer membrane. Only forms a complex with a lipoprotein if the residue after the N-terminal Cys is not an aspartate (The Asp acts as a targeting signal to indicate that the lipoprotein should stay in the inner membrane). In Shewanella pealeana (strain ATCC 700345 / ANG-SQ1), this protein is Outer-membrane lipoprotein carrier protein.